Consider the following 2772-residue polypeptide: MKLSESTINKDYPFLSEEEDSKIISLICNYLSLGQFELARALILQSQEKQQLKNQQKQTQSDNNNNNNNNNNNNNNNNNNNNCDRISSILYHTIRNGPPSTWLTSESIPSSPHLSWLCSIEFYQLNKDGFISSISEKTLLLVEFAILIYTLLGEQQNNDSRNIQPIIQELREYHYVLLSQQRQQSNNKNNNNNNIDNLSEQQIYQMESILLRSKLGNSTISILKTILINNTEFGRYIIKQFTNPFISSLNNNNNNNGISNSLLYSRYPVTQQLESLVAEVITLLIDSSQYNEAYNLLSIIDISNNDNSNSNNNNNNNNNNINSDEVDSNSGDNNIISKLLERVANLNNSNFGNNVEELTLLKIPFSSKLSNLETDNNNNNNNNNNNNNNNNNNNNNNNNNNNNNNNNNNNNNGKSISRLKIYESLLSNPTLTPLKTYLKHEESILKENSSQQQPIDFPECFEILKNYFSLKPKQLDINSKNNNNDNNNNNNNNSSSSGSNSSSSRNKNNLKNNLKSFDRKDSEYQNAESIFWYWYYHFLRVNDRHYLEYALEKSIDLIKNKRFEEALIVVKPFEKLLPLLILLCWDHFENDITSRKHLTNLLDLSKGISKFNKNNNNNNNNNNNNNNNNNNNNNNNNNNNNNNNNNNNNEWSCRRMIAVPNSPNGHSLIIGESTFDLLDEKSKTLRGSFSPSSMSPSIPPSASNDSSLTSSPYLLSLGRSMTTNISNAILSQLFHHSFIYVVKDCLPFITSNDILKFIEKDPDFPINYQQQQEQQEQQQQSNDSENLLSQIALDKLNDMNLVRGYYLIKNILKFFQYRATSTDAIVDKVEFDSVLDDVFDLFKGISNANISIGLIESLYLSLFLSNQDLKSNNNNTNDLGEISSSSSAFRLNNDFNYNNNSNNNDKPNNNEFYQYYKKVISNSSEENNLSYYLVNNNSHNNNNNNNNNNNNNNNNNNNNNNNNNNNNNNNNNNNNNNNNNSNNEINEQIIEIIDNEFSYQKLSKSQHKQYYITCVMLESLINKLITLIDFIVDSSLQQQQKQEIKKERIQILLLNLENLKHRVDLSKWILNLDDNNYNHIPFMSLVLMPIKSLILMAMRTNYPNFQIIIKYFDIPKDIENQAYQFKSIPDLLDVLENNGGGDNDDDGADINLNQLTTSFNGINNDNIFQILSDIVIGSNCNNSLIKKILKINNNNNNDNDNNNKSKSYLNWISILHKEYIDQISTTNSNSLYDILINPQSIPDKDYQNISKMKQYINNKKIIIKSLNRLIKCYDNTINNKNNNNNIDNNNNNNNNNNNNNNNNNNNNNNNNNNNNNNNNNNIEDDVKIIIENDNNISNNQILSTLFKYILSVNQIYSNCSDYSSIFRNINQSPKSILQDIVFNEKDYKKAEQLSNLLQVDLSDLIISSISHTTPKNPPSSLFKSSTPESSVLNSPIFYINNQQQQQQQLQLQQQQQQQQLQQQQQQQQQLQLQQQQQQQQQQQQQQQQQQQQQQQQQQQQQQQQQLTNDNIQKNYLTMDLVNYFDKSSKLLSSLVCMLKSPDHKDVEPFIQFSIENSKKLPSNSFSNWINEILKAHTFYHKYFNQQQNNNYNNNNYNNNYNNNNNNNNNNNNNNNNNNNIDNQQTINETFDYKLIQNSESIHQQQNFFFKIIQFFVNNNNLMDALKIADEYLEEGAPDWLLKLLVFKDRSQGYKYIRRMRDKPKALNLVLELYNNWDIATCIDMIVICKSFLGLPDQINQQQQPTTTTTTTIQDQQDENIKNELNHLHKAFLLYQSILNNANNGNVYRNWQEIKEICQNDPATMVRNLLDSKHYDLARKIRDHFSVSGIKKEIEERYLYYLLVEKDDASLALQTLSELGEESISILDSLLPVINEISVKLFLVQFLLSNMRSKLSKEKLEELTKQEIGYQVLLVLPTDLQVEYSQFINHPLLIIEMLIMNEKIPLVAKLLLDIKELKDVDDLLTYYARKALSFSRYLAKNDLMMLDDYLQKEFNDQDDYVSNNNYNKNDQINSKEKDKDKKRKSFLSNLPIITNKSSQTIKQSPSFEVEDFRHEISNRSSTPPPPPPTETPSLNIVHSTSPNSSVSLLKDKNIQQKWLLTGNDTVQDEKIRHSHFFIRSPSISLAKSLFDLCESKKKVYNTCIELYSNLSMLLSSNYSDDNLLIINLIQQLLMYTKLQLLRDPKSGGPTLVAVCDTYLGKVELFQSLVVSKCSGSMSLVDLSDPQKARQLRDRLIQEDRLRLAIDVATKCNIPADSAWVSWGISLIQTGSYSEAREKFKYCLTPTGPDRRVMSPSNSLSIDTIDSGVILNQIIQLLESPPSPNHSNFRSLYNYLLSTQGGGSSSNLKSTPKIDDSMFYNLLQPQLLNNSSNNSNNNNNTNNNNNNNNAITNLFSNAFSDKKSLTNNNSSSINNTTIINNIEMDKNRLDEAIYYLKKYGNGRMLVNFLIKHNLYELACKTILSDSLSFNIFYDEIVLKAIANSSLQDLFNTIKSIDPKLLAFQDHLLASCKNMNERKQYQLLFEFQLYMGDNVRAGLTCVKMFLTNPEGTANSRVHHLEQALYYFNIGLTNYVKGCVLSQPEINNYIQNCTTQLEISKFFYKSSSVFPTTSPVHKLSIFGTIKQKTELVEQLTINGNFDLGFKIAQESKLTLPPIYVNALTTMARKKMSSKIEDYLNQLRGCINPEDWELIAMPVFETQCLELKEFKSAEKFIPKLYTVYNSVRISILCGKLKTAYLTAVQHKDRSLIKMVMDEAQKTNQPVIFKWCQEILNQ.

6 disordered regions span residues 50-82 (QQLK…NNNN), 371-415 (NLET…NGKS), 475-514 (LDIN…KNNL), 612-650 (NKNN…NNNE), 685-708 (LRGS…DSSL), and 933-982 (LVNN…NNSN). Composition is skewed to low complexity over residues 376-412 (NNNN…NNNN), 478-514 (NSKN…KNNL), 614-649 (NNNN…NNNN), and 688-708 (SFSP…DSSL). The LRR 1 repeat unit spans residues 1065–1089 (LSKWILNLDDNNYNHIPFMSLVLMP). The disordered stretch occupies residues 1282–1319 (NNNNIDNNNNNNNNNNNNNNNNNNNNNNNNNNNNNNNN). LRR repeat units lie at residues 1393 to 1416 (LSNL…TPKN) and 1543 to 1567 (HKDV…SFSN). Over residues 1587 to 1619 (QNNNYNNNNYNNNYNNNNNNNNNNNNNNNNNNN) the composition is skewed to low complexity. The disordered stretch occupies residues 1587-1622 (QNNNYNNNNYNNNYNNNNNNNNNNNNNNNNNNNIDN). One copy of the LRR 4 repeat lies at 1899 to 1922 (LEELTKQEIGYQVLLVLPTDLQVE). 2 stretches are compositionally biased toward polar residues: residues 1999–2011 (YVSN…NDQI) and 2073–2083 (LNIVHSTSPNS). Disordered regions lie at residues 1999–2021 (YVSN…KDKK), 2054–2083 (EISN…SPNS), and 2367–2386 (NNSS…NNNN). The stretch at 2414–2439 (TTIINNIEMDKNRLDEAIYYLKKYGN) is one LRR 5 repeat.

The sequence is that of Protein DDB_G0276689 from Dictyostelium discoideum (Social amoeba).